The sequence spans 204 residues: N-(5'-phosphoribosyl)anthranilate isomerase (204 aa).

It belongs to the TrpF family.

It catalyses the reaction N-(5-phospho-beta-D-ribosyl)anthranilate = 1-(2-carboxyphenylamino)-1-deoxy-D-ribulose 5-phosphate. The protein operates within amino-acid biosynthesis; L-tryptophan biosynthesis; L-tryptophan from chorismate: step 3/5. The protein is N-(5'-phosphoribosyl)anthranilate isomerase of Desulforudis audaxviator (strain MP104C).